A 145-amino-acid polypeptide reads, in one-letter code: UPF0763 protein CFF8240_1572 (145 aa).

The protein belongs to the UPF0763 family.

In Campylobacter fetus subsp. fetus (strain 82-40), this protein is UPF0763 protein CFF8240_1572.